Reading from the N-terminus, the 149-residue chain is Transcriptional repressor NrdR (149 aa).

A zinc finger spans residues 3–34 (CPFCSAVDTKVIDSRLVGEGSQVRRRRQCLVC). The ATP-cone domain occupies 49–139 (PRVIKSNEVR…VYRSFEDIRE (91 aa)).

The protein belongs to the NrdR family. It depends on Zn(2+) as a cofactor.

Functionally, negatively regulates transcription of bacterial ribonucleotide reductase nrd genes and operons by binding to NrdR-boxes. The polypeptide is Transcriptional repressor NrdR (Pectobacterium carotovorum subsp. carotovorum (strain PC1)).